The following is a 130-amino-acid chain: MNYSEKLTGAPPMTEVPLELLEEMLWFFRVEDATPWNCSMFVLAALVAIISFILLGRNIQANRNQKKLPPEKQTPEVLYLAEGGNKDDKNLTSLTETLLSEKPTLAQGEMEAKCSDVPRVHLPDPQEPES.

Over 1–35 (MNYSEKLTGAPPMTEVPLELLEEMLWFFRVEDATP) the chain is Extracellular. Residues 36-56 (WNCSMFVLAALVAIISFILLG) traverse the membrane as a helical segment. At 57 to 130 (RNIQANRNQK…HLPDPQEPES (74 aa)) the chain is on the cytoplasmic side. The interval 99–130 (LSEKPTLAQGEMEAKCSDVPRVHLPDPQEPES) is disordered. Residues 110-124 (MEAKCSDVPRVHLPD) are compositionally biased toward basic and acidic residues.

The protein belongs to the OST-beta family. As to quaternary structure, interacts with SLC51A. The Ost-alpha/Ost-beta complex is a heterodimer composed of alpha (SLC51A) and beta (SLC51B) subunit; induces the transport of SLC51A from the endoplasmic reticulum to the plasma membrane.

It localises to the cell membrane. The enzyme catalyses taurocholate(out) = taurocholate(in). The catalysed reaction is estrone 3-sulfate(out) = estrone 3-sulfate(in). It catalyses the reaction dehydroepiandrosterone 3-sulfate(out) = dehydroepiandrosterone 3-sulfate(in). It carries out the reaction tauroursodeoxycholate(out) = tauroursodeoxycholate(in). The enzyme catalyses glycoursodeoxycholate(out) = glycoursodeoxycholate(in). The catalysed reaction is glycocholate(out) = glycocholate(in). It catalyses the reaction taurochenodeoxycholate(out) = taurochenodeoxycholate(in). It carries out the reaction glycochenodeoxycholate(out) = glycochenodeoxycholate(in). The enzyme catalyses taurodeoxycholate(out) = taurodeoxycholate(in). The catalysed reaction is glycodeoxycholate(out) = glycodeoxycholate(in). It catalyses the reaction prostaglandin E2(out) = prostaglandin E2(in). In terms of biological role, essential component of the Ost-alpha/Ost-beta complex, a heterodimer that acts as the intestinal basolateral transporter responsible for bile acid export from enterocytes into portal blood. The Ost-alpha/Ost-beta complex efficiently transports the major species of bile acids (taurocholate). Taurine conjugates are transported more efficiently across the basolateral membrane than glycine-conjugated bile acids. Can also transport steroids such as estrone 3-sulfate and dehydroepiandrosterone 3-sulfate, therefore playing a role in the enterohepatic circulation of sterols. Able to transport eicosanoids such as prostaglandin E2. Modulates SLC51A glycosylation, membrane trafficking and stability activities. The chain is Organic solute transporter subunit beta (SLC51B) from Bos taurus (Bovine).